Consider the following 778-residue polypeptide: Phosphoribosylformylglycinamidine synthase subunit PurL (778 aa).

His44 is a catalytic residue. 2 residues coordinate ATP: Tyr47 and Lys86. Glu88 contributes to the Mg(2+) binding site. Substrate-binding positions include 89–92 and Arg111; that span reads SHNH. The active-site Proton acceptor is His90. Residues Asp112 and Asp265 each coordinate Mg(2+). 309–311 contributes to the substrate binding site; sequence ESQ. The tract at residues 455–474 is disordered; the sequence is TRQPPGEGLPGRSGQAGPPK. ATP contacts are provided by Asn518 and Gly555. Residue Asn556 coordinates Mg(2+). Ser558 lines the substrate pocket.

It belongs to the FGAMS family. As to quaternary structure, monomer. Part of the FGAM synthase complex composed of 1 PurL, 1 PurQ and 2 PurS subunits.

It localises to the cytoplasm. It catalyses the reaction N(2)-formyl-N(1)-(5-phospho-beta-D-ribosyl)glycinamide + L-glutamine + ATP + H2O = 2-formamido-N(1)-(5-O-phospho-beta-D-ribosyl)acetamidine + L-glutamate + ADP + phosphate + H(+). It functions in the pathway purine metabolism; IMP biosynthesis via de novo pathway; 5-amino-1-(5-phospho-D-ribosyl)imidazole from N(2)-formyl-N(1)-(5-phospho-D-ribosyl)glycinamide: step 1/2. In terms of biological role, part of the phosphoribosylformylglycinamidine synthase complex involved in the purines biosynthetic pathway. Catalyzes the ATP-dependent conversion of formylglycinamide ribonucleotide (FGAR) and glutamine to yield formylglycinamidine ribonucleotide (FGAM) and glutamate. The FGAM synthase complex is composed of three subunits. PurQ produces an ammonia molecule by converting glutamine to glutamate. PurL transfers the ammonia molecule to FGAR to form FGAM in an ATP-dependent manner. PurS interacts with PurQ and PurL and is thought to assist in the transfer of the ammonia molecule from PurQ to PurL. This Symbiobacterium thermophilum (strain DSM 24528 / JCM 14929 / IAM 14863 / T) protein is Phosphoribosylformylglycinamidine synthase subunit PurL.